The sequence spans 307 residues: Cysteine synthase (307 aa).

Lys-42 is modified (N6-(pyridoxal phosphate)lysine). Pyridoxal 5'-phosphate contacts are provided by residues Asn-72, 176-180 (GTGGH), and Ser-263.

Belongs to the cysteine synthase/cystathionine beta-synthase family. Requires pyridoxal 5'-phosphate as cofactor.

The enzyme catalyses O-acetyl-L-serine + hydrogen sulfide = L-cysteine + acetate. Its pathway is amino-acid biosynthesis; L-cysteine biosynthesis; L-cysteine from L-serine: step 2/2. This Flavobacterium sp. (strain K3-15 / DSM ID92-509) protein is Cysteine synthase (cysK).